We begin with the raw amino-acid sequence, 288 residues long: THO complex subunit 4D (288 aa).

Residues 1–55 (MSGALNMTLDEIVKRGKTARSGGRGISRGRGRGRGGGGRGAGPARRGPLAVNARP) form a disordered region. S2 is subject to N-acetylserine. An RRM domain is found at 93–170 (TRLHVTNLDQ…RPMRLEILGG (78 aa)). A disordered region spans residues 201–288 (QGGGGRGRVR…SYHADAMNTS (88 aa)). A compositionally biased stretch (gly residues) spans 232-260 (QGGGMRGGRGGFRARGRGNGGRGRGGGRG). The segment covering 264-281 (KPVEKSAADLDKDLESYH) has biased composition (basic and acidic residues).

This sequence belongs to the ALYREF family. As to quaternary structure, interacts with PARP1. Interacts with EIF4A3.

It is found in the nucleus. It localises to the nucleoplasm. The protein resides in the nucleolus. In terms of biological role, export adapter involved in nuclear export of spliced and unspliced mRNA. Plays a role in disease resistance. Mediates multiple defense responses triggered by NEP1, including stomatal closure, hypersensitive cell death (HCD) and defense-related gene expression. The protein is THO complex subunit 4D of Arabidopsis thaliana (Mouse-ear cress).